A 312-amino-acid chain; its full sequence is Beta-ketoacyl-[acyl-carrier-protein] synthase III (312 aa).

Residues cysteine 112 and histidine 237 contribute to the active site. Positions 238–242 (QANIR) are ACP-binding. The active site involves asparagine 267.

The protein belongs to the thiolase-like superfamily. FabH family. As to quaternary structure, homodimer.

It is found in the cytoplasm. The catalysed reaction is (2S)-2-methylbutanoyl-CoA + malonyl-[ACP] + H(+) = (4S)-4-methyl-3-oxohexanoyl-[ACP] + CO2 + CoA. It catalyses the reaction 2-methylpropanoyl-CoA + malonyl-[ACP] + H(+) = 4-methyl-3-oxopentanoyl-[ACP] + CO2 + CoA. It carries out the reaction 3-methylbutanoyl-CoA + malonyl-[ACP] + H(+) = 5-methyl-3-oxohexanoyl-[ACP] + CO2 + CoA. The enzyme catalyses malonyl-[ACP] + acetyl-CoA + H(+) = 3-oxobutanoyl-[ACP] + CO2 + CoA. Its pathway is lipid metabolism; fatty acid biosynthesis. In terms of biological role, catalyzes the condensation reaction of fatty acid synthesis by the addition to an acyl acceptor of two carbons from malonyl-ACP. Catalyzes the first condensation reaction which initiates fatty acid synthesis and may therefore play a role in governing the total rate of fatty acid production. Possesses both acetoacetyl-ACP synthase and acetyl transacylase activities. Can use branched-chain acyl-CoAs, with a preference for 2-methylbutanoyl-CoA, the precursor of odd-numbered anteiso fatty acids, at 30 degrees Celsius, which is further increased at a low temperature. Shows weak activity with acetyl-CoA. The sequence is that of Beta-ketoacyl-[acyl-carrier-protein] synthase III from Listeria monocytogenes serotype 1/2a (strain 10403S).